Consider the following 490-residue polypeptide: Cytochrome P450 2C7 (490 aa).

A Dimethylated arginine modification is found at Arg-144. Cys-435 provides a ligand contact to heme.

It belongs to the cytochrome P450 family. The cofactor is heme.

The protein localises to the endoplasmic reticulum membrane. The protein resides in the microsome membrane. The enzyme catalyses an organic molecule + reduced [NADPH--hemoprotein reductase] + O2 = an alcohol + oxidized [NADPH--hemoprotein reductase] + H2O + H(+). In terms of biological role, cytochromes P450 are a group of heme-thiolate monooxygenases. In liver microsomes, this enzyme is involved in an NADPH-dependent electron transport pathway. It oxidizes a variety of structurally unrelated compounds, including steroids, fatty acids, and xenobiotics. The polypeptide is Cytochrome P450 2C7 (Cyp2c7) (Rattus norvegicus (Rat)).